Reading from the N-terminus, the 236-residue chain is Baculoviral IAP repeat-containing protein 8 (236 aa).

The stretch at 7 to 70 is one BIR repeat; the sequence is RLITFGTWMY…KWYPGCKYLL (64 aa). Zn(2+) contacts are provided by cysteine 39, cysteine 42, histidine 59, and cysteine 66. The RING-type zinc-finger motif lies at 189–224; the sequence is CKICMDRHIAVVFIPCGHLVTCKQCAEAVDRCPMCS.

Belongs to the IAP family. In terms of assembly, binds to caspase-9. As to expression, testis specific in normal tissues.

It localises to the cytoplasm. Protects against apoptosis mediated by BAX. This is Baculoviral IAP repeat-containing protein 8 (BIRC8) from Homo sapiens (Human).